A 690-amino-acid polypeptide reads, in one-letter code: Iron-sulfur clusters transporter ATM1, mitochondrial (690 aa).

The N-terminal 26 residues, methionine 1–histidine 26, are a transit peptide targeting the mitochondrion. The Mitochondrial matrix portion of the chain corresponds to serine 27–arginine 110. The chain crosses the membrane as a helical span at residues valine 111–phenylalanine 132. One can recognise an ABC transmembrane type-1 domain in the interval valine 111–glutamine 401. The Mitochondrial intermembrane segment spans residues lysine 133 to glycine 155. A helical membrane pass occupies residues leucine 156–phenylalanine 179. Over alanine 180 to valine 228 the chain is Mitochondrial matrix. Residues leucine 229–tyrosine 252 form a helical membrane-spanning segment. Glutamine 253 is a topological domain (mitochondrial intermembrane). Residues phenylalanine 254–isoleucine 274 traverse the membrane as a helical segment. Residues lysine 275 to alanine 340 lie on the Mitochondrial matrix side of the membrane. Glutathione-binding positions include arginine 280–arginine 284 and asparagine 343–glutamine 346. A helical transmembrane segment spans residues phenylalanine 341 to tyrosine 359. Residues methionine 360 to aspartate 374 lie on the Mitochondrial intermembrane side of the membrane. Residues leucine 375 to tyrosine 396 traverse the membrane as a helical segment. Glycine 393 is a binding site for glutathione. Residues arginine 397–leucine 690 lie on the Mitochondrial matrix side of the membrane. One can recognise an ABC transporter domain in the interval isoleucine 436 to threonine 672. Residues tyrosine 445 and glycine 469–lysine 480 contribute to the ATP site.

The protein belongs to the ABC transporter superfamily. ABCB family. Heavy Metal importer (TC 3.A.1.210) subfamily. In terms of assembly, homodimer.

Its subcellular location is the mitochondrion inner membrane. In terms of biological role, performs an essential function in the generation of cytoplasmic iron-sulfur proteins by mediating the ATP-dependent export of Fe/S cluster precursors synthesized by NFS1 and other mitochondrial proteins. Hydrolyzes ATP. Binds glutathione and may function by transporting a glutathione-conjugated iron-sulfur compound. The sequence is that of Iron-sulfur clusters transporter ATM1, mitochondrial from Saccharomyces cerevisiae (strain ATCC 204508 / S288c) (Baker's yeast).